Reading from the N-terminus, the 381-residue chain is Chaperone protein DnaJ (381 aa).

Positions 5-70 constitute a J domain; that stretch reads DYYEVLGVSR…DKKAAYDRYG (66 aa). The CR-type zinc-finger motif lies at 140–218; that stretch reads GVQKTINVPA…CHGAGRVEKE (79 aa). Residues Cys-153, Cys-156, Cys-170, Cys-173, Cys-192, Cys-195, Cys-206, and Cys-209 each contribute to the Zn(2+) site. 4 CXXCXGXG motif repeats span residues 153–160, 170–177, 192–199, and 206–213; these read CDACKGTG, CPTCSGMG, CPTCNGMG, and CKVCHGAG.

The protein belongs to the DnaJ family. As to quaternary structure, homodimer. Requires Zn(2+) as cofactor.

Its subcellular location is the cytoplasm. Participates actively in the response to hyperosmotic and heat shock by preventing the aggregation of stress-denatured proteins and by disaggregating proteins, also in an autonomous, DnaK-independent fashion. Unfolded proteins bind initially to DnaJ; upon interaction with the DnaJ-bound protein, DnaK hydrolyzes its bound ATP, resulting in the formation of a stable complex. GrpE releases ADP from DnaK; ATP binding to DnaK triggers the release of the substrate protein, thus completing the reaction cycle. Several rounds of ATP-dependent interactions between DnaJ, DnaK and GrpE are required for fully efficient folding. Also involved, together with DnaK and GrpE, in the DNA replication of plasmids through activation of initiation proteins. This Cereibacter sphaeroides (strain KD131 / KCTC 12085) (Rhodobacter sphaeroides) protein is Chaperone protein DnaJ.